The primary structure comprises 534 residues: MAWCLVFMVFLIYCLISTVGLPVAPADEAAMQLGGVGGGRLSVEPSDVMEASLDFGRLTSAEPLAVFHPRGAGDVAALVKAAYGSASGIRVSARGHGHSISGQAQAAGGVVVDMSHGWRAEAAERTLPVYSPALGGHYIDVWGGELWIDVLNWTLAHGGLAPRSWTDYLYLSVGGTLSNAGISGQAFHHGPQISNVYELDVVTGKGEVVTCSESNNPDLFFGALGGLGQLGIITRARIALEPAPHRVRWIRALYSNFTEFTADQERLISLQHGGRRFDYVEGFVVAAEGLINNWRSSFFSPQNPVKLSSLKHHSGVLYCLEVTKNYDDSTAVTVDQDVEALLGELNFIPGTVFTTDLPYVDFLDRVHKAELKLRGKGMWEVPHPWLNLFVPASRIADFDRGVFRGVLGSRTAGGPILIYPMNRHKWDPRSSVVTPEEDVFYLVAFLRSAVPGSTDPAQSLEALERQNREILEFCDEAGIGAKQYLPNHKAQREWEAHFGARWARFARLKAEFDPRAMLATGQGIFDSPPLLAES.

The first 20 residues, 1–20 (MAWCLVFMVFLIYCLISTVG), serve as a signal peptide directing secretion. In terms of domain architecture, FAD-binding PCMH-type spans 59 to 243 (TSAEPLAVFH…TRARIALEPA (185 aa)). A93, G95, and G97 together coordinate FAD. A Pros-8alpha-FAD histidine modification is found at H98. Residues S99 and Q103 each coordinate FAD. N152 carries N-linked (GlcNAc...) asparagine glycosylation. FAD-binding residues include D167, S172, S178, I182, and I233. N256 carries N-linked (GlcNAc...) asparagine glycosylation. FAD is bound by residues Y484 and Q522.

The protein belongs to the oxygen-dependent FAD-linked oxidoreductase family. In terms of assembly, monomer. It depends on FAD as a cofactor. In terms of tissue distribution, expressed in inflorescence meristems.

It localises to the secreted. The protein localises to the extracellular space. The catalysed reaction is N(6)-dimethylallyladenine + A + H2O = 3-methyl-2-butenal + adenine + AH2. In terms of biological role, catalyzes the oxidation of cytokinins, a family of N(6)-substituted adenine derivatives that are plant hormones, where the substituent is an isopentenyl group. This is Cytokinin dehydrogenase 5 (CKX5) from Oryza sativa subsp. japonica (Rice).